The following is a 140-amino-acid chain: uncharacterized protein (140 aa).

This sequence belongs to the MG067/MG068/MG395 family.

This is an uncharacterized protein from Mycoplasma pneumoniae (strain ATCC 29342 / M129 / Subtype 1) (Mycoplasmoides pneumoniae).